We begin with the raw amino-acid sequence, 298 residues long: Homoserine kinase (298 aa).

Position 83 to 93 (83 to 93 (PISRGLGSSSS)) interacts with ATP.

The protein belongs to the GHMP kinase family. Homoserine kinase subfamily.

The protein resides in the cytoplasm. It carries out the reaction L-homoserine + ATP = O-phospho-L-homoserine + ADP + H(+). The protein operates within amino-acid biosynthesis; L-threonine biosynthesis; L-threonine from L-aspartate: step 4/5. Functionally, catalyzes the ATP-dependent phosphorylation of L-homoserine to L-homoserine phosphate. This is Homoserine kinase from Clostridium botulinum (strain Alaska E43 / Type E3).